Reading from the N-terminus, the 225-residue chain is Glutathione s-transferase kappa 2 (225 aa).

Glutathione contacts are provided by residues Ser15–Tyr17, Asn52, and Ser200–Asp201.

This sequence belongs to the GST superfamily. Kappa family. In terms of tissue distribution, expressed in the pharynx, body wall muscles and epidermis. Weaker expression is seen in the intestine.

It localises to the mitochondrion. The catalysed reaction is RX + glutathione = an S-substituted glutathione + a halide anion + H(+). Functionally, has roles in respiratory and lipid metabolism. The polypeptide is Glutathione s-transferase kappa 2 (gstk-2) (Caenorhabditis elegans).